The following is a 432-amino-acid chain: Glutamyl-tRNA reductase (432 aa).

Substrate contacts are provided by residues T49–R52, S101, E106–Q108, and Q112. The Nucleophile role is filled by C50. Position 181–186 (G181–I186) interacts with NADP(+). Positions F407–P432 are disordered.

It belongs to the glutamyl-tRNA reductase family. Homodimer.

It catalyses the reaction (S)-4-amino-5-oxopentanoate + tRNA(Glu) + NADP(+) = L-glutamyl-tRNA(Glu) + NADPH + H(+). It functions in the pathway porphyrin-containing compound metabolism; protoporphyrin-IX biosynthesis; 5-aminolevulinate from L-glutamyl-tRNA(Glu): step 1/2. Its function is as follows. Catalyzes the NADPH-dependent reduction of glutamyl-tRNA(Glu) to glutamate 1-semialdehyde (GSA). The chain is Glutamyl-tRNA reductase from Xanthomonas oryzae pv. oryzae (strain MAFF 311018).